The sequence spans 207 residues: Ras-related protein Rab-8A (207 aa).

GTP contacts are provided by Ser-17, Gly-18, Val-19, Gly-20, Lys-21, Thr-22, Cys-23, Ser-35, Ser-39, and Thr-40. Thr-22 serves as a coordination point for Mg(2+). 2 consecutive short sequence motifs (switch) follow at residues 31–45 (DAFN…GIDF) and 63–80 (DTAG…YYRG). Mg(2+) contacts are provided by Thr-40 and Asp-63. Residue Gly-66 participates in GTP binding. Thr-72 is modified (phosphothreonine). Positions 121, 122, 124, 152, and 153 each coordinate GTP. Phosphoserine occurs at positions 181 and 185. Cysteine methyl ester is present on Cys-204. Cys-204 is lipidated: S-geranylgeranyl cysteine. Residues 205–207 (VLL) constitute a propeptide, removed in mature form.

This sequence belongs to the small GTPase superfamily. Rab family. Interacts (GTP-bound form) with MICALL1; regulates RAB8A association with recycling endosomes. Interacts with MICALL2; competes with RAB13 and is involved in E-cadherin endocytic recycling. Interacts (GTP-bound form) with MICAL1, MICALCL, MICAL3, EHBP1 and EHBP1L1; at least in case of MICAL1, MICALCL, MICAL3 and EHBP1L1 two molecules of RAB8A can bind to one molecule of the effector protein; ternary complexes of RAB8A, RAB13 and either MICAL1 or EHBP1L1 are possible. Interacts with EHD1. Interacts with MAP4K2 and SYTL4. Interacts with SGSM1 and SGSM3. Interacts with RABIF, RIMS2, RPH3A and RPH3A. Interacts with OPTN. Interacts with RAB3IP, RAB3IP functions as guanine exchange factor (GEF). Interacts with MYO5B. Interacts with CIMAP3. Interacts with BIRC6/bruce. Interacts with OCRL. Interacts with AHI1. Interacts with DCDC1. Interacts with LRRK2; interaction facilitates phosphorylation of Thr-72. Interacts with RAB31P, GDI1, GDI2, CHM, CHML, RABGGTA, RABGGTB, TBC1D15 and INPP5B; these interactions are dependent on Thr-72 not being phosphorylated. Interacts with RILPL1 and RILPL2; these interactions are dependent on the phosphorylation of Thr-72 by LRRK2. Interacts with DZIP1; prevents inhibition by the GDP-dissociation inhibitor GDI2. Interacts (in GDP-bound form) with RAB3IP/Rabin8, RAB3IP functions as guanine exchange factor (GEF) towards RAB8A. Interacts (in GDP-bound form) with RPGR, RPGR functions as GEF towards RAB8A. It depends on Mg(2+) as a cofactor. Post-translationally, phosphorylation of Thr-72 in the switch II region by LRRK2 prevents the association of RAB regulatory proteins, including CHM, CHML and RAB GDP dissociation inhibitors GDI1 and GDI2. Phosphorylation by LRRK2 is required for localization to stressed lysosomes.

It localises to the cell membrane. The protein localises to the golgi apparatus. It is found in the endosome membrane. Its subcellular location is the recycling endosome membrane. The protein resides in the cell projection. It localises to the cilium. The protein localises to the cytoplasmic vesicle. It is found in the phagosome membrane. Its subcellular location is the cytoplasm. The protein resides in the cytoskeleton. It localises to the microtubule organizing center. The protein localises to the centrosome. It is found in the centriole. Its subcellular location is the cilium basal body. The protein resides in the midbody. It localises to the lysosome. The enzyme catalyses GTP + H2O = GDP + phosphate + H(+). Regulated by guanine nucleotide exchange factors (GEFs) such as RAB3IP/Rabin8 and RPGR which promote the exchange of bound GDP for free GTP, GTPase activating proteins (GAPs) which increase the GTP hydrolysis activity, and GDP dissociation inhibitors (GDIs) which inhibit the dissociation of the nucleotide from the GTPase. Activated in response to insulin. The small GTPases Rab are key regulators of intracellular membrane trafficking, from the formation of transport vesicles to their fusion with membranes. Rabs cycle between an inactive GDP-bound form and an active GTP-bound form that is able to recruit to membranes different sets of downstream effectors directly responsible for vesicle formation, movement, tethering and fusion. RAB8A is involved in polarized vesicular trafficking and neurotransmitter release. Together with RAB11A, RAB3IP, the exocyst complex, PARD3, PRKCI, ANXA2, CDC42 and DNMBP promotes transcytosis of PODXL to the apical membrane initiation sites (AMIS), apical surface formation and lumenogenesis. Regulates the compacted morphology of the Golgi. Together with MYO5B and RAB11A participates in epithelial cell polarization. Also involved in membrane trafficking to the cilium and ciliogenesis. Together with MICALL2, may also regulate adherens junction assembly. May play a role in insulin-induced transport to the plasma membrane of the glucose transporter GLUT4 and therefore play a role in glucose homeostasis. Involved in autophagy. Participates in the export of a subset of neosynthesized proteins through a Rab8-Rab10-Rab11-dependent endososomal export route. Targeted to and stabilized on stressed lysosomes through LRRK2 phosphorylation. Suppresses stress-induced lysosomal enlargement through EHBP1 and EHNP1L1 effector proteins. The chain is Ras-related protein Rab-8A (RAB8A) from Pongo abelii (Sumatran orangutan).